Reading from the N-terminus, the 201-residue chain is Adenylyl-sulfate kinase (201 aa).

The tract at residues 1-23 (MALHDENVVWHSHPVTPQQREQH) is disordered. 35-42 (GLSGSGKS) serves as a coordination point for ATP. Ser-109 serves as the catalytic Phosphoserine intermediate.

Belongs to the APS kinase family.

The enzyme catalyses adenosine 5'-phosphosulfate + ATP = 3'-phosphoadenylyl sulfate + ADP + H(+). The protein operates within sulfur metabolism; hydrogen sulfide biosynthesis; sulfite from sulfate: step 2/3. Catalyzes the synthesis of activated sulfate. The sequence is that of Adenylyl-sulfate kinase from Escherichia coli O6:K15:H31 (strain 536 / UPEC).